The sequence spans 31 residues: Cytochrome b6-f complex subunit 6 (31 aa).

The chain crosses the membrane as a helical span at residues 4–26; that stretch reads ITSYFGFLLAALTITSALLIGLN.

This sequence belongs to the PetL family. In terms of assembly, the 4 large subunits of the cytochrome b6-f complex are cytochrome b6, subunit IV (17 kDa polypeptide, PetD), cytochrome f and the Rieske protein, while the 4 small subunits are PetG, PetL, PetM and PetN. The complex functions as a dimer.

The protein localises to the plastid. The protein resides in the chloroplast thylakoid membrane. In terms of biological role, component of the cytochrome b6-f complex, which mediates electron transfer between photosystem II (PSII) and photosystem I (PSI), cyclic electron flow around PSI, and state transitions. PetL is important for photoautotrophic growth as well as for electron transfer efficiency and stability of the cytochrome b6-f complex. The protein is Cytochrome b6-f complex subunit 6 of Amborella trichopoda.